A 283-amino-acid chain; its full sequence is Glutamate racemase (283 aa).

Substrate-binding positions include 28–29 and 60–61; these read DS and YG. Cys-92 serves as the catalytic Proton donor/acceptor. 93–94 lines the substrate pocket; the sequence is NT. The Proton donor/acceptor role is filled by Cys-204. 205–206 contributes to the substrate binding site; sequence TH.

The protein belongs to the aspartate/glutamate racemases family.

It carries out the reaction L-glutamate = D-glutamate. It participates in cell wall biogenesis; peptidoglycan biosynthesis. Its function is as follows. Provides the (R)-glutamate required for cell wall biosynthesis. The chain is Glutamate racemase from Klebsiella pneumoniae (strain 342).